Reading from the N-terminus, the 362-residue chain is 3-dehydroquinate synthase (362 aa).

Residues Asp-71–Lys-76, Gly-105–Asp-109, Thr-129–Thr-130, Lys-142, Lys-151, and Cys-169–Thr-172 contribute to the NAD(+) site. Zn(2+) is bound by residues Glu-184, His-247, and His-264.

It belongs to the sugar phosphate cyclases superfamily. Dehydroquinate synthase family. Co(2+) is required as a cofactor. The cofactor is Zn(2+). NAD(+) serves as cofactor.

The protein resides in the cytoplasm. The enzyme catalyses 7-phospho-2-dehydro-3-deoxy-D-arabino-heptonate = 3-dehydroquinate + phosphate. The protein operates within metabolic intermediate biosynthesis; chorismate biosynthesis; chorismate from D-erythrose 4-phosphate and phosphoenolpyruvate: step 2/7. Functionally, catalyzes the conversion of 3-deoxy-D-arabino-heptulosonate 7-phosphate (DAHP) to dehydroquinate (DHQ). This chain is 3-dehydroquinate synthase, found in Escherichia coli O6:K15:H31 (strain 536 / UPEC).